The primary structure comprises 467 residues: UDP-N-acetylmuramate--L-alanine ligase (467 aa).

114–120 (GTHGKTT) contacts ATP.

The protein belongs to the MurCDEF family.

The protein localises to the cytoplasm. The catalysed reaction is UDP-N-acetyl-alpha-D-muramate + L-alanine + ATP = UDP-N-acetyl-alpha-D-muramoyl-L-alanine + ADP + phosphate + H(+). It participates in cell wall biogenesis; peptidoglycan biosynthesis. Its function is as follows. Cell wall formation. The polypeptide is UDP-N-acetylmuramate--L-alanine ligase (Rhodopseudomonas palustris (strain BisB5)).